A 476-amino-acid chain; its full sequence is Efflux pump atB (476 aa).

The disordered stretch occupies residues 1–38 (MAPQLAGSSHSSSASDQAHRQSSDPALESGSDTHVGSI). The next 10 membrane-spanning stretches (helical) occupy residues 69–89 (LIVA…LAPL), 96–116 (KPVY…CAVA), 127–147 (FFNG…VGDL), 186–206 (WSFY…SLLV), 264–284 (LLLC…FGAF), 294–314 (FNLW…IIGI), 347–367 (LPPA…FAWT), 372–392 (VHWI…IMIF), 403–425 (YPLY…AAAF), and 440–460 (WAGF…YIFY).

The protein belongs to the major facilitator superfamily.

The protein resides in the cell membrane. Its function is as follows. Efflux pump that might be required for efficient secretion of terreic acid. The sequence is that of Efflux pump atB from Aspergillus terreus (strain NIH 2624 / FGSC A1156).